A 515-amino-acid polypeptide reads, in one-letter code: Ecdysteroid UDP-glucosyltransferase (515 aa).

Residues 1–31 form the signal peptide; it reads MKMIILVVSLHVLRNSAAVRVLCMFPTPSYS.

Belongs to the UDP-glycosyltransferase family.

In terms of biological role, catalyzes the transfer of glucose from UDP-glucose to ecdysteroids which are insect molting hormones. Expression of egt interferes with normal insect development and block molting. In Spodoptera littoralis nuclear polyhedrosis virus (SlNPV), this protein is Ecdysteroid UDP-glucosyltransferase (EGT).